The sequence spans 160 residues: Protein-export protein SecB (160 aa).

Belongs to the SecB family. In terms of assembly, homotetramer, a dimer of dimers. One homotetramer interacts with 1 SecA dimer.

The protein localises to the cytoplasm. Functionally, one of the proteins required for the normal export of preproteins out of the cell cytoplasm. It is a molecular chaperone that binds to a subset of precursor proteins, maintaining them in a translocation-competent state. It also specifically binds to its receptor SecA. The chain is Protein-export protein SecB from Nitrosomonas eutropha (strain DSM 101675 / C91 / Nm57).